A 144-amino-acid chain; its full sequence is Large ribosomal subunit protein uL13 (144 aa).

Belongs to the universal ribosomal protein uL13 family. As to quaternary structure, part of the 50S ribosomal subunit.

Its function is as follows. This protein is one of the early assembly proteins of the 50S ribosomal subunit, although it is not seen to bind rRNA by itself. It is important during the early stages of 50S assembly. The chain is Large ribosomal subunit protein uL13 from Nitratidesulfovibrio vulgaris (strain ATCC 29579 / DSM 644 / CCUG 34227 / NCIMB 8303 / VKM B-1760 / Hildenborough) (Desulfovibrio vulgaris).